We begin with the raw amino-acid sequence, 309 residues long: MQRNNFTEVIEFVFLGFSSFGKHQITLFVVFLTIYILTLAGNIIIVTITHIDHHLHTPMYFFLSMLASSETVYTLVIVPRMLSSLIFYNLPISLAGCATQMFFFVTLATNNCFLLTAMGYDRYVAICNPLRYTIIMSKGMCALLVCGSLGTGLVMAVLHVPAMFHLPFCGTVVEHFFCDIYPVMKLSCVDTTVNEIINYGVSSFVILVPIGLIFISYVLIVSSILKIVSTEGQKKAFATCASHLTVVIVHYGCASIAYLKPKSESSVEKDLLLSVTYTIITPLLNPVVYSLRNKEVKDALCRAVGRNTS.

Topologically, residues 1 to 27 are extracellular; sequence MQRNNFTEVIEFVFLGFSSFGKHQITL. The chain crosses the membrane as a helical span at residues 28-48; the sequence is FVVFLTIYILTLAGNIIIVTI. Over 49–57 the chain is Cytoplasmic; that stretch reads THIDHHLHT. A helical membrane pass occupies residues 58 to 78; sequence PMYFFLSMLASSETVYTLVIV. The Extracellular segment spans residues 79-84; sequence PRMLSS. A helical membrane pass occupies residues 85 to 105; it reads LIFYNLPISLAGCATQMFFFV. A disulfide bridge links Cys-97 with Cys-178. Over 106 to 131 the chain is Cytoplasmic; it reads TLATNNCFLLTAMGYDRYVAICNPLR. A helical membrane pass occupies residues 132-152; it reads YTIIMSKGMCALLVCGSLGTG. The Extracellular segment spans residues 153 to 203; the sequence is LVMAVLHVPAMFHLPFCGTVVEHFFCDIYPVMKLSCVDTTVNEIINYGVSS. A helical membrane pass occupies residues 204–224; sequence FVILVPIGLIFISYVLIVSSI. Topologically, residues 225 to 235 are cytoplasmic; it reads LKIVSTEGQKK. Residues 236–256 form a helical membrane-spanning segment; it reads AFATCASHLTVVIVHYGCASI. Over 257–270 the chain is Extracellular; the sequence is AYLKPKSESSVEKD. Residues 271-291 form a helical membrane-spanning segment; the sequence is LLLSVTYTIITPLLNPVVYSL. Topologically, residues 292–309 are cytoplasmic; it reads RNKEVKDALCRAVGRNTS.

It belongs to the G-protein coupled receptor 1 family. Expressed in the olfactory epithelium as well as in the testis. Expressed in round spermatids during stages VI-VIII of spermatogenesis.

Its subcellular location is the cell membrane. Olfactory receptor. Activated by the synthetic floral odorant, lyral, and by alpha-cedrene, a sesquiterpene constituent of cedarwood oil. Its activation increases intracellular Ca(2+). Acts as a key regulator of myogenesis through its actions on cell migration and adhesion by activating the Ca(2+)-dependent AKT signal transduction pathway. Also acts as a regulator of angiogenesis. Moreover, plays a role in the regulation of lipid accumulation in hepatocytes via the cAMP-PKA pathway. Involved in sperm chemotaxis and motility. This chain is Olfactory receptor 10J5, found in Mus musculus (Mouse).